A 410-amino-acid polypeptide reads, in one-letter code: Acetate kinase (410 aa).

Position 7 (Asn-7) interacts with Mg(2+). Residue Lys-14 coordinates ATP. Residue Arg-88 participates in substrate binding. The Proton donor/acceptor role is filled by Asp-145. Residues His-203–Gly-207, Asp-278–Arg-280, and Gly-326–Asn-330 each bind ATP. Glu-379 is a Mg(2+) binding site.

It belongs to the acetokinase family. Homodimer. The cofactor is Mg(2+). It depends on Mn(2+) as a cofactor.

It is found in the cytoplasm. It carries out the reaction acetate + ATP = acetyl phosphate + ADP. Its pathway is metabolic intermediate biosynthesis; acetyl-CoA biosynthesis; acetyl-CoA from acetate: step 1/2. Catalyzes the formation of acetyl phosphate from acetate and ATP. Can also catalyze the reverse reaction. This chain is Acetate kinase, found in Onion yellows phytoplasma (strain OY-M).